Here is a 132-residue protein sequence, read N- to C-terminus: Agouti-signaling protein (132 aa).

The N-terminal stretch at 1 to 22 is a signal peptide; it reads MDVTRLLLATLLVFLCFFTVYS. Asparagine 39 is a glycosylation site (N-linked (GlcNAc...) asparagine). The interval 62-88 is disordered; sequence ISRKEAEKKRSSKKEASMKKVAQPRTP. Positions 63–79 are enriched in basic and acidic residues; sequence SRKEAEKKRSSKKEASM. 5 disulfides stabilise this stretch: cysteine 93/cysteine 108, cysteine 100/cysteine 114, cysteine 107/cysteine 125, cysteine 111/cysteine 132, and cysteine 116/cysteine 123. Residues 93-132 form the Agouti domain; the sequence is CVATRYSCKPPAPACCDPCASCQCRFFRSACSCRVLRLNC.

Its subcellular location is the secreted. Its function is as follows. Involved in the regulation of melanogenesis. The binding of ASP to MC1R precludes alpha-MSH initiated signaling and thus blocks production of cAMP, leading to a down-regulation of eumelanogenesis (brown/black pigment) and thus increasing synthesis of pheomelanin (yellow/red pigment). The polypeptide is Agouti-signaling protein (ASIP) (Semnopithecus entellus (Northern plains gray langur)).